The primary structure comprises 281 residues: CCAAT/enhancer-binding protein epsilon (281 aa).

Residues 1 to 30 (MSHGTYYECEPRGGQQPLEFSGGRAGPGEL) form a disordered region. A Glycyl lysine isopeptide (Lys-Gly) (interchain with G-Cter in SUMO2) cross-link involves residue K121. At S181 the chain carries Phosphoserine. The 64-residue stretch at 204-267 (SLEYRLRRER…DTLRNLFRQI (64 aa)) folds into the bZIP domain. Residues 208–245 (RLRRERNNIAVRKSRDKAKRRIMETQQKVLEYMAENER) form a basic motif region. A leucine-zipper region spans residues 246–267 (LRSRVDQLTQELDTLRNLFRQI).

This sequence belongs to the bZIP family. C/EBP subfamily. In terms of assembly, binds DNA as a homodimer and as a heterodimer. Can form stable heterodimers with CEBPA, CEBPB and CEBPD. Interacts with GATA1 and SPI1. Interacts with SMARCD2.

Its subcellular location is the nucleus. Its function is as follows. Transcriptional activator. C/EBP are DNA-binding proteins that recognize two different motifs: the CCAAT homology common to many promoters and the enhanced core homology common to many enhancers. Required for the promyelocyte-myelocyte transition in myeloid differentiation. This Rattus norvegicus (Rat) protein is CCAAT/enhancer-binding protein epsilon (Cebpe).